The chain runs to 1291 residues: DNA-directed RNA polymerase subunit beta (1291 aa).

This sequence belongs to the RNA polymerase beta chain family. The RNAP catalytic core consists of 2 alpha, 1 beta, 1 beta' and 1 omega subunit. When a sigma factor is associated with the core the holoenzyme is formed, which can initiate transcription.

It catalyses the reaction RNA(n) + a ribonucleoside 5'-triphosphate = RNA(n+1) + diphosphate. DNA-dependent RNA polymerase catalyzes the transcription of DNA into RNA using the four ribonucleoside triphosphates as substrates. In Mycoplasma mycoides subsp. mycoides SC (strain CCUG 32753 / NCTC 10114 / PG1), this protein is DNA-directed RNA polymerase subunit beta.